Reading from the N-terminus, the 470-residue chain is MKKTKIVCTIGPKTESEEMLSKMLDAGMNVMRLNFSHGDYAEHGQRIQNLRNVMSKTGKKAAILLDTKGPEIRTIKLEGGNDVSLKAGQTFTFTTDKSVVGNNEIVAVTYEGFTSDLSVGNTVLVDDGLIGMEVTAIEGNKVICKVLNNGDLGENKGVNLPGVSIALPALAEKDKQDLIFGCEQGVDFVAASFIRKRSDVVEIREHLKAHGGENIQIISKIENQEGLNNFDEILEASDGIMVARGDLGVEIPVEEVIFAQKMMIEKCIRARKVVITATQMLDSMIKNPRPTRAEAGDVANAILDGTDAVMLSGESAKGKYPLEAVSIMATICERTDRVMNSRLDYNNDSRKLRITEAVCRGAVETAEKLEAPLIVVATQGGKSARAVRKYFPDATILALTTNEVTARQLVLSKGVVSQLVKEINSTDDFYRLGKDVALQSGLAQKGDVVVMVSGALVPSGTTNTASVHVL.

Residue Arg32 participates in substrate binding. Residues Asn34, Ser36, Asp66, and Thr67 each coordinate K(+). 34 to 37 (NFSH) is an ATP binding site. 2 residues coordinate ATP: Arg73 and Lys156. Lys220 is a substrate binding site. Residue Glu222 participates in Mg(2+) binding. Positions 245, 246, and 278 each coordinate substrate. A Mg(2+)-binding site is contributed by Asp246.

It belongs to the pyruvate kinase family. In terms of assembly, homotetramer. Mg(2+) serves as cofactor. K(+) is required as a cofactor.

It catalyses the reaction pyruvate + ATP = phosphoenolpyruvate + ADP + H(+). Its pathway is carbohydrate degradation; glycolysis; pyruvate from D-glyceraldehyde 3-phosphate: step 5/5. Belongs to type I PK; fructose 1,6-bisphosphate-activated. In terms of biological role, catalyzes the formation of pyruvate in the last step of glycolysis, it is irreversible under physiological conditions. The reaction is critical for the control of metabolic flux in the second part of glycolysis. The protein is Pyruvate kinase I (pykF) of Salmonella typhimurium (strain LT2 / SGSC1412 / ATCC 700720).